Reading from the N-terminus, the 68-residue chain is Large ribosomal subunit protein uL29 (68 aa).

Belongs to the universal ribosomal protein uL29 family.

The sequence is that of Large ribosomal subunit protein uL29 from Picosynechococcus sp. (strain ATCC 27264 / PCC 7002 / PR-6) (Agmenellum quadruplicatum).